We begin with the raw amino-acid sequence, 571 residues long: DExH-box ATP-dependent RNA helicase DExH16, mitochondrial (571 aa).

The transit peptide at 1–56 (MAYSVVRLRKVSALGISRVLQADKGSLWRFHFEPEFGDLLRLGVLTRNYRKNSGSP) directs the protein to the mitochondrion. One can recognise a Helicase ATP-binding domain in the interval 83-212 (IARKKKRKVI…HLCGDPAVVP (130 aa)). 96 to 103 (GPTNSGKT) is an ATP binding site. Positions 176 to 179 (DEIQ) match the DEIH box; degenerate motif. In terms of domain architecture, Helicase C-terminal spans 213 to 399 (LVEDILKVTG…GLFPTFDLLS (187 aa)).

The protein belongs to the DExH box helicase family. In terms of assembly, homodimer; in free form. Component of the mitochondrial degradosome (mtEXO) complex which is a heteropentamer containing 2 copies of SUPV3L1 and 3 copies of PNPT1. Mg(2+) is required as a cofactor. It depends on Mn(2+) as a cofactor. In terms of tissue distribution, weakly expressed.

It is found in the nucleus. The protein localises to the mitochondrion matrix. It localises to the mitochondrion nucleoid. It catalyses the reaction ATP + H2O = ADP + phosphate + H(+). Activated by the presence of mitochondrial RNA. Major helicase player in mitochondrial RNA metabolism. Component of the mitochondrial degradosome (mtEXO) complex, that degrades 3' overhang double-stranded RNA with a 3'-to-5' directionality in an ATP-dependent manner. ATPase and ATP-dependent multisubstrate helicase, able to unwind double-stranded (ds) DNA and RNA, and RNA/DNA heteroduplexes in the 5'-to-3' direction. Plays a role in the RNA surveillance system in mitochondria; regulates the stability of mature mRNAs, the removal of aberrantly formed mRNAs and the rapid degradation of non coding processing intermediates. Required during pollen development. This Arabidopsis thaliana (Mouse-ear cress) protein is DExH-box ATP-dependent RNA helicase DExH16, mitochondrial.